Here is a 491-residue protein sequence, read N- to C-terminus: Ribonuclease G (491 aa).

Residues 40–129 (GNIYKGRVTR…LTTDITLPSR (90 aa)) enclose the S1 motif domain. Mg(2+)-binding residues include D305 and D348.

It belongs to the RNase E/G family. RNase G subfamily. Homodimer, in equilibrium with possible higher multimers. It depends on Mg(2+) as a cofactor.

It is found in the cytoplasm. In terms of biological role, an endonuclease that acts in the processing of the 5'-end of 16S rRNA and 23S rRNA. It prefers 5'-monophosphorylated substrates and cleaves single-stranded sites rich in A and U residues; contributes to tRNA processing and mRNA turnover. The protein is Ribonuclease G (rng) of Haemophilus influenzae (strain ATCC 51907 / DSM 11121 / KW20 / Rd).